We begin with the raw amino-acid sequence, 583 residues long: Lipoprotein LpqB (583 aa).

The N-terminal stretch at 1–29 is a signal peptide; that stretch reads MSNKTTEATKTTKVKKVLSVVAGLGLLAG. C30 is lipidated: N-palmitoyl cysteine. The S-diacylglycerol cysteine moiety is linked to residue C30. Residues 38-63 are disordered; sequence NPEAISSYAPAPSGQEAPTPTDGQPS.

It belongs to the LpqB lipoprotein family.

Its subcellular location is the cell membrane. This is Lipoprotein LpqB from Corynebacterium jeikeium (strain K411).